The following is a 29-amino-acid chain: Galanin (29 aa).

A Threonine amide modification is found at T29.

It belongs to the galanin family.

It localises to the secreted. Functionally, contracts smooth muscle of the gastrointestinal and genitourinary tract, regulates growth hormone release, modulates insulin release, and may be involved in the control of adrenal secretion. The chain is Galanin (GAL) from Gallus gallus (Chicken).